A 154-amino-acid polypeptide reads, in one-letter code: Probable prefoldin subunit 5 (154 aa).

It belongs to the prefoldin subunit alpha family. In terms of assembly, heterohexamer of two PFD-alpha type and four PFD-beta type subunits. Interacts with byr1.

Its subcellular location is the cytoplasm. In terms of biological role, binds specifically to cytosolic chaperonin (c-CPN) and transfers target proteins to it. Binds to nascent polypeptide chain and promotes folding in an environment in which there are many competing pathways for nonnative proteins. Required for normal cytoskeletal function and when bound to byr1, is involved in the regulation of sexual differentiation. The polypeptide is Probable prefoldin subunit 5 (bob1) (Schizosaccharomyces pombe (strain 972 / ATCC 24843) (Fission yeast)).